Reading from the N-terminus, the 485-residue chain is MTITPQQLIALLPLLIVGLTVVVVMLCIAWRRNHFINSTLTVIGINLALLSLWFVTQNGPMDVTPLMRVDGFSMFYTGLVLVASLATSTLAYAWLAGYPGNRDEFYLLVLIATMGGILLASANHLAALFLGIELISLPLFGMVGYAFRQKRSLEASIKYTLLSAAAASFLLFGMALVYAQTGQLSFTALGQTLNDTMLTQPVLLAGLGMMVVGLGFKLSLVPFHLWTPDVYQGAPVPVSTFLATASKIAIFAVVMRLFLYAPVTHSDTVRLVLAIIAFASMLFGNLMALSQSNIKRVLGYSSIAHLGYLLVGLIVVQAHTLALETVGVYLAGYLFASLGAFGVVSLMSSTYTGEDADSLYSYRGLFWHKPLLSSVLTVMMLSLAGIPMTLGFIGKFYVIALGVNSHLGWLTGAVVAGSAIGLFYYLRIMVSLYLSPPENLRRDMPSNWALTAGGVVVLISSLLVLLLGLYPQPLITLVQLAYPIL.

14 helical membrane passes run 8–28, 35–55, 75–95, 105–125, 127–147, 159–179, 203–223, 235–255, 271–291, 303–323, 326–346, 371–393, 406–426, and 449–469; these read LIAL…MLCI, FINS…LWFV, FYTG…YAWL, FYLL…ANHL, ALFL…GYAF, YTLL…LVYA, LLAG…LVPF, PVPV…AVVM, LVLA…ALSQ, IAHL…TLAL, VGVY…VVSL, LLSS…LGFI, HLGW…FYYL, and ALTA…LLGL.

The protein belongs to the complex I subunit 2 family. NDH-1 is composed of 13 different subunits. Subunits NuoA, H, J, K, L, M, N constitute the membrane sector of the complex.

It is found in the cell inner membrane. The catalysed reaction is a quinone + NADH + 5 H(+)(in) = a quinol + NAD(+) + 4 H(+)(out). Its function is as follows. NDH-1 shuttles electrons from NADH, via FMN and iron-sulfur (Fe-S) centers, to quinones in the respiratory chain. The immediate electron acceptor for the enzyme in this species is believed to be ubiquinone. Couples the redox reaction to proton translocation (for every two electrons transferred, four hydrogen ions are translocated across the cytoplasmic membrane), and thus conserves the redox energy in a proton gradient. This is NADH-quinone oxidoreductase subunit N from Sodalis glossinidius (strain morsitans).